A 201-amino-acid polypeptide reads, in one-letter code: Imidazole glycerol phosphate synthase subunit HisH 1 (201 aa).

The region spanning 1–201 is the Glutamine amidotransferase type-1 domain; it reads MIALIDYKAG…LKLLENFIRL (201 aa). Cysteine 80 functions as the Nucleophile in the catalytic mechanism. Residues histidine 183 and glutamate 185 contribute to the active site.

As to quaternary structure, heterodimer of HisH and HisF.

It is found in the cytoplasm. The enzyme catalyses 5-[(5-phospho-1-deoxy-D-ribulos-1-ylimino)methylamino]-1-(5-phospho-beta-D-ribosyl)imidazole-4-carboxamide + L-glutamine = D-erythro-1-(imidazol-4-yl)glycerol 3-phosphate + 5-amino-1-(5-phospho-beta-D-ribosyl)imidazole-4-carboxamide + L-glutamate + H(+). The catalysed reaction is L-glutamine + H2O = L-glutamate + NH4(+). It participates in amino-acid biosynthesis; L-histidine biosynthesis; L-histidine from 5-phospho-alpha-D-ribose 1-diphosphate: step 5/9. In terms of biological role, IGPS catalyzes the conversion of PRFAR and glutamine to IGP, AICAR and glutamate. The HisH subunit provides the glutamine amidotransferase activity that produces the ammonia necessary to HisF for the synthesis of IGP and AICAR. This is Imidazole glycerol phosphate synthase subunit HisH 1 from Campylobacter jejuni (strain RM1221).